The chain runs to 493 residues: Probable cytochrome P450 313a2 (493 aa).

Position 438 (Cys-438) interacts with heme.

This sequence belongs to the cytochrome P450 family. It depends on heme as a cofactor.

Its subcellular location is the endoplasmic reticulum membrane. It localises to the microsome membrane. Functionally, may be involved in the metabolism of insect hormones and in the breakdown of synthetic insecticides. This chain is Probable cytochrome P450 313a2 (Cyp313a2), found in Drosophila melanogaster (Fruit fly).